Here is a 1828-residue protein sequence, read N- to C-terminus: MILKSFLLGNLLSLCMKIINSVVVVGLYYGFLTTFSIGPSYLFLLRARVMEEGTEKEVSATTGFITGQLMIFISIYYAPLHLAMGRPYTITVLGLPYLLFHFFWKNHKHFFDYGSTNLNSMRNFSIQSIFLNNFIFQLLNHFVLPSSTLIRLVNISMFRCNNKTLFVISSFVGWLIGHILFMKWVGLILFWIQRNRSIRSNPLIRSNKYLVSELRNFLSRMVNIFLFITCVYYLGRIPSPILTKKLKETSETEEGEENEDETNVEIEKFSEAKETKQEQKGSFAEEDSSLGSEEREDPNKLYGKKRKGYQENWKFEILKDKDLFWFEKPIVTLLFDYKRWDRPLRYIKNDRFANAVRNEMSQYFFHKCPVDGKQKISFTYPPSLSIFFEMIEKHLSLCTTEKLSPEDLYNHWVYTNEKKRCNLNNEFINRIEALNKGSLSMHVLEKRTRLYNDKNEQECLPRMYDPFLNGPYRGTIKKVYSHSILDASTTSTEDSLRVVWINKIDDILPTNYQEFEEKMDPFNGESLSTDINHSLASTSELAGESPMDFRFNLKEGLVLPAEQKQRRFDSENPMKYLKFLFDAITTDTPNYKTIQTKSIGIEEIGKKVPRWSYKLTNDLQQQERENEEESTEDHAIRSRKSKRVVIYTDNDKNPNTPISTNGNQAEEVALIRYSQQSDFRRDLIKGSRRAQRRKTVTWEIFQANVHSPLFLDRIDKTFFFSFDISGTINLAFRNWTEKGSEFKTSNSDEKETKEKEKKREDKKEENERIAIAETWDTIIFAQAIRGIMLVTQSILRKYIVLPSLIIAKNLVRMLLFQFPEWYEDLKEWNREMHVKCTYNGVQLSETEFPKDWLTDGIQIKILFPFCLKPWHRSKLRPHHRDPMKKKGKKDNFCFLTVWGMETELPFGSSRKRPSFFEPILKELEKKIRKAKKKYFLVLSVLKEWFRKVSKEKTRWIRKIVLFIKKIIKEFAKVNSILLFGRKKVYESNENKKDSITIISNKILSEPTIRIRSMDWTNYSLTEKKMKDLADRTTTIRNQIERITKEKRTIFLTPDRNGSPNETSCDDKRSESQKHIWQISKRRSAWFIRKWRYFIKIFSERIYIDIFLCAINIPRVNAQLFFESTKKILDKYIYNDQRKKEGIDETNPNKLISISKKYFSNISNKKSRIYWDLSSLSQAYLFYKLSQTQVINKYRLKSVLQYRDLFLRDRIRDYLGTRGIFDSKFKKLPNSGMGEWKNWLRGHYQYNLSQTRWSRLVSKKWRDRVNQHRTIQNKDYKRDSYEKDQFIHYEKQNDSVVNSLPSQKEKFQKHYRYDLFSYKYINYGVNYGDSKDSYRSPLQVNEDRGIPYNYNTPKSESVFVLGGIALSDYLEEKYIIDRGKSRDKKYLEWKILNFCLRKNIDIEAWTNINKNTKIGTNDYQIIDKKNPFYLTTYQEINPLNPKSFFFGRMGMNQGMLYRPIANLEPWFFSEFVPLYDAYKIKPWIIPIKLLLFNFEGNETISENKNINGNKKGELPISSNQKDYLELENRNQEEKEEFGQGNLGSDTQNQQKDVEKDYAKSDIKKRGKKRQSKSNKGAELQFFLKRYLLFQLRWDDPLNQRMMNNVKVYCLLLRLINPREIAISSIQRGEMRLDVMLIQKDLTLTELIKRGILIIEPVRLSIKWDGQFIMYQTIGISLVHKNKHQTNRRYREKRYVDENYFDGSIAQHGKMLVNRAENDYDLLVPENILSPRRRRELRILISFNSGNRNVVDRNLVFFNGNNVKNFGQFLDEDKHIDTDINKFIQFKLFLWPNYRLEDLACINRYWFDTNNGSRFSMLRIHMYPPRFGIG.

6 consecutive transmembrane segments (helical) span residues 18–38, 64–84, 87–107, 124–144, 172–192, and 222–242; these read IINSVVVVGLYYGFLTTFSIG, FITGQLMIFISIYYAPLHLAM, PYTITVLGLPYLLFHFFWKNH, FSIQSIFLNNFIFQLLNHFVL, VGWLIGHILFMKWVGLILFWI, and VNIFLFITCVYYLGRIPSPIL. The segment covering 270–279 has biased composition (basic and acidic residues); the sequence is SEAKETKQEQ. Disordered regions lie at residues 270-301, 618-637, 741-763, and 1533-1571; these read SEAKETKQEQKGSFAEEDSSLGSEEREDPNKL, DLQQQERENEEESTEDHAIR, EFKTSNSDEKETKEKEKKREDKK, and KEEFGQGNLGSDTQNQQKDVEKDYAKSDIKKRGKKRQSK. Residues 1550–1562 show a composition bias toward basic and acidic residues; the sequence is KDVEKDYAKSDIK.

This sequence belongs to the TIC214 family. Part of the Tic complex.

The protein localises to the plastid. Its subcellular location is the chloroplast inner membrane. In terms of biological role, involved in protein precursor import into chloroplasts. May be part of an intermediate translocation complex acting as a protein-conducting channel at the inner envelope. In Calycanthus floridus var. glaucus (Eastern sweetshrub), this protein is Protein TIC 214.